Reading from the N-terminus, the 725-residue chain is Glutamine-dependent NAD(+) synthetase (725 aa).

Positions 5 to 275 (VTVATCALNQ…VEVLTATLDL (271 aa)) constitute a CN hydrolase domain. The active-site Proton acceptor; for glutaminase activity is the Glu-45. Lys-114 functions as the For glutaminase activity in the catalytic mechanism. Cys-175 serves as the catalytic Nucleophile; for glutaminase activity. A ligase region spans residues 325–706 (YHRPEEEISL…KASQTREEQV (382 aa)). An ATP-binding site is contributed by 355 to 362 (PLSGGVDS). Residue Ser-357 is part of the active site.

It in the C-terminal section; belongs to the NAD synthetase family. As to quaternary structure, homohexamer. Highly expressed in small intestine, kidney, liver and testis. Weakly expressed in skeletal muscle, spleen, lung, heart and brain.

It catalyses the reaction deamido-NAD(+) + L-glutamine + ATP + H2O = L-glutamate + AMP + diphosphate + NAD(+) + H(+). It participates in cofactor biosynthesis; NAD(+) biosynthesis; NAD(+) from deamido-NAD(+) (L-Gln route): step 1/1. Functionally, catalyzes the final step of the nicotinamide adenine dinucleotide (NAD) de novo synthesis pathway, the ATP-dependent amidation of deamido-NAD using L-glutamine as a nitrogen source. This is Glutamine-dependent NAD(+) synthetase (Nadsyn1) from Mus musculus (Mouse).